A 1513-amino-acid polypeptide reads, in one-letter code: MFHLLLENEEIQFSNSFAQFYLQVDEAKKIFDEIDDDEYDKIQDQRKNDDFIVDDDGYGYRDHGGEIWERDDHPEDGGKKKKKSSMYVFSFSPKFIAQPLFLQPNEQSITAFMKPKSTINRPGAVTNSSAQIKQKPKVSAEQSKDIMNNLFQELDSKDVDELQDVNNSAVVTELNKPIAFNQNDMLTSKYAVTLETRQEVEQKRVTEQIQAQAQIGQNQQSSNPFSKKRKFEEISTNQNANASDSKRVSNQTNDNLNKVETQVISMLKVANPQIKVTSKLARMDDSMKIDQTSAQKNQIEQTVNHSKLQRYNQNQMMSGIKLDNRTSKPIRNLEIWNQVLANTQEFPLPLNENGTLSFYWIDAHEENNGTDLYIFGKIYQPQMRQFVSCSMKVNGMQRELYALPKMRGKARGALTVEEEKQQVRAVMMELDDIRKKRFPQISKWRCKPVNRKYAFEMPIQHGEHQFLKIKYDSTMPPLPSTIQGNTFECIFGSTQSMLELFILKRKIRGPCWMTIKNPTKVTDFKKTWCRQGIVIDNPKNVEVTLEDLNKQELPPLTSLTFSFKTTRAQQNTNEIAMISCLINTNIAQEGPSQVERTQSFTLLRKLDGKPMPYDFDQKVKQRKENIIQKFENERQMIEAFIAKVFIVDPDLVVAHNLCGGMFDLLLARIQYLKVNHWSRIGRLKKTQIPNKKLDFGGSSYGGSQWIPRQVTCGRLLVDTFLSAKELVRETSYDLTYLAKVQLKKDRQDFDDELLPTLYITSERLFSLIDHTEKDAYLTIQLMNHLAIIPLTLQLTNIAGNLWFRSLQNARAERNEMLLLHEFKKKKFILPDKKAPFAKDFKRNMFADEFEELKSGKGPKKGGKRKKAAYAGGLVIEPKAGFYDNIILLLDFNSLYPSIIQEYNLCFTTVNRRPTKNFDGSEVKSQFKAAGTDANEGNEVEEADLPDKNVNVKDAVLPNVLRDLVQKRKAVKEKMKNEKDAVKLSQLEIRQKAIKLTANSMYGCLGFGSSRFHAQAIAALITKTGRDTLLRTKDIAENKLGFNVVYGDTDSIMINTGTNQLQQSLEMGKRPQGLKLIALYKCLEIEIDGVFKSLLLLKKKKYAALKYEGFGTPDAKVVQEVKGLDMVRRDWCPLSKNVGNFVLNQILSGKQREDVVLNLNEYLSDIGEKMKNNGITLDQFIITKQLTKAISEYSDIKGQPHVAVAQRLKNQGKSESDLVNNFIPYVIGAQPFDPSKTNPALAGKAYHPEEVVSSKGKILLDIEWYITMQVLPPITRLIEHIDGIDVEFVAQCLGVDPKKYKYHSSEKKTGETNNDDGTLIQNPILQTETERSLKGRTIAELTIKCPHCSESYHFPGIFQDGKNNTLSGLLCIKCTQPIPEAYIQNRVTLFLKQLLTLYYQGNKQCQEPACGAVSRQLLYNNKCINLACKLKNDTRYTEQKTNDTLRYLQGLFNVKKYIQENQKNGCVHKTVEEVPNFDAFARMQGKVDDIMIRSKYNKVDLSSIFNFMKLGKQQ.

The tract at residues 235–254 is disordered; sequence STNQNANASDSKRVSNQTND. The Zn(2+) site is built by Cys-1344, Cys-1347, Cys-1370, Cys-1373, Cys-1404, Cys-1409, Cys-1422, and Cys-1427. A CysA-type zinc finger spans residues 1344–1373; that stretch reads CPHCSESYHFPGIFQDGKNNTLSGLLCIKC. A CysB motif motif is present at residues 1404 to 1427; it reads CQEPACGAVSRQLLYNNKCINLAC.

This sequence belongs to the DNA polymerase type-B family.

Its subcellular location is the nucleus. It catalyses the reaction DNA(n) + a 2'-deoxyribonucleoside 5'-triphosphate = DNA(n+1) + diphosphate. Polymerase alpha in a complex with DNA primase is a replicative polymerase. This is DNA polymerase alpha catalytic subunit from Oxytricha trifallax (Sterkiella histriomuscorum).